A 487-amino-acid chain; its full sequence is Serine/threonine-protein kinase 4 (487 aa).

The residue at position 1 (Met-1) is an N-acetylmethionine. Phosphothreonine is present on Thr-3. Positions 30–281 (FDVLEKLGEG…ATQLLQHPFV (252 aa)) constitute a Protein kinase domain. ATP is bound by residues 36–44 (LGEGSYGSV) and Lys-59. The active-site Proton acceptor is Asp-149. Thr-183 is subject to Phosphothreonine; by autocatalysis. Ser-265 is modified (phosphoserine). Positions 290–310 (LRDLINEAMDVKLKRQESQQR) form a coiled coil. The segment covering 303-312 (KRQESQQREV) has biased composition (basic and acidic residues). Residues 303–332 (KRQESQQREVDQDDEENSEEDEMDSGTMVR) are disordered. The segment covering 313–326 (DQDDEENSEEDEMD) has biased composition (acidic residues). Ser-320 bears the Phosphoserine mark. Residues Thr-340 and Thr-367 each carry the phosphothreonine modification. Thr-387 bears the Phosphothreonine; by PKB/AKT1 mark. Phosphoserine occurs at positions 410 and 414. Position 433 is a phosphotyrosine (Tyr-433). The SARAH domain occupies 433 to 480 (YEFLKSWTVEDLQKRLLALDPMMEQEIEEIRQKYQSKRQPILDAIEAK).

Belongs to the protein kinase superfamily. STE Ser/Thr protein kinase family. STE20 subfamily. Homodimer; mediated via the coiled-coil region. Interacts with NORE1, which inhibits autoactivation. Interacts with and stabilizes SAV1. Interacts with RASSF1. Interacts with FOXO3. Interacts with RASSF2 (via SARAH domain). Interacts with AR, PKB/AKT1, TNNI3 and SIRT1. Interacts with DLG5 (via PDZ domain 3). Interacts with MARK3 and SCRIB in the presence of DLG5. Requires Mg(2+) as cofactor. Autophosphorylated on serine and threonine residues. Phosphorylation at Thr-387 by PKB/AKT1, leads to inhibition of its: kinase activity, nuclear translocation and autophosphorylation at Thr-183. It also diminishes its cleavage by caspases and its ability to phosphorylate FOXO3. In terms of processing, proteolytically cleaved by caspase-3 during apoptosis at Asp-326 and Asp-349 resulting in a 37 kDa or a 39 kDa subunit respectively. The 39 kDa subunit is further cleaved into the 37 kDa form. Proteolytic cleavage results in kinase activation and nuclear translocation of the truncated form (MST1/N). It is less likely that cleavage at Asp-349 is a prerequisite for activation as this site is not conserved in the murine ortholog.

The protein resides in the cytoplasm. It is found in the nucleus. The enzyme catalyses L-seryl-[protein] + ATP = O-phospho-L-seryl-[protein] + ADP + H(+). It carries out the reaction L-threonyl-[protein] + ATP = O-phospho-L-threonyl-[protein] + ADP + H(+). With respect to regulation, inhibited by the C-terminal non-catalytic region. Activated by caspase-cleavage. Full activation also requires homodimerization and autophosphorylation of Thr-183. Activated by RASSF1 which acts by preventing its dephosphorylation. Functionally, stress-activated, pro-apoptotic kinase which, following caspase-cleavage, enters the nucleus and induces chromatin condensation followed by internucleosomal DNA fragmentation. Key component of the Hippo signaling pathway which plays a pivotal role in organ size control and tumor suppression by restricting proliferation and promoting apoptosis. The core of this pathway is composed of a kinase cascade wherein STK3/MST2 and STK4/MST1, in complex with its regulatory protein SAV1, phosphorylates and activates LATS1/2 in complex with its regulatory protein MOB1, which in turn phosphorylates and inactivates YAP1 oncoprotein and WWTR1/TAZ. Phosphorylation of YAP1 by LATS2 inhibits its translocation into the nucleus to regulate cellular genes important for cell proliferation, cell death, and cell migration. STK3/MST2 and STK4/MST1 are required to repress proliferation of mature hepatocytes, to prevent activation of facultative adult liver stem cells (oval cells), and to inhibit tumor formation. Phosphorylates 'Ser-14' of histone H2B (H2BS14ph) during apoptosis. Phosphorylates FOXO3 upon oxidative stress, which results in its nuclear translocation and cell death initiation. Phosphorylates MOBKL1A, MOBKL1B and RASSF2. Phosphorylates TNNI3 (cardiac Tn-I) and alters its binding affinity to TNNC1 (cardiac Tn-C) and TNNT2 (cardiac Tn-T). Phosphorylates FOXO1 on 'Ser-212' and regulates its activation and stimulates transcription of PMAIP1 in a FOXO1-dependent manner. Phosphorylates SIRT1 and inhibits SIRT1-mediated p53/TP53 deacetylation, thereby promoting p53/TP53 dependent transcription and apoptosis upon DNA damage. Acts as an inhibitor of PKB/AKT1. Phosphorylates AR on 'Ser-650' and suppresses its activity by intersecting with PKB/AKT1 signaling and antagonizing formation of AR-chromatin complexes. The protein is Serine/threonine-protein kinase 4 (STK4) of Chlorocebus aethiops (Green monkey).